We begin with the raw amino-acid sequence, 314 residues long: Ribonuclease Z (314 aa).

Positions 62, 64, 66, 67, 144, 215, and 273 each coordinate Zn(2+). D66 functions as the Proton acceptor in the catalytic mechanism.

This sequence belongs to the RNase Z family. Homodimer. Zn(2+) is required as a cofactor.

It carries out the reaction Endonucleolytic cleavage of RNA, removing extra 3' nucleotides from tRNA precursor, generating 3' termini of tRNAs. A 3'-hydroxy group is left at the tRNA terminus and a 5'-phosphoryl group is left at the trailer molecule.. Zinc phosphodiesterase, which displays some tRNA 3'-processing endonuclease activity. Probably involved in tRNA maturation, by removing a 3'-trailer from precursor tRNA. This is Ribonuclease Z from Prochlorococcus marinus (strain NATL1A).